The chain runs to 254 residues: Zinc transporter GufA (254 aa).

The next 7 membrane-spanning stretches (helical) occupy residues Gly-4 to Val-24, Val-74 to His-94, Ala-112 to Val-132, Leu-143 to Ala-163, Phe-176 to Leu-196, Leu-198 to Ile-218, and Glu-234 to Gly-254. Positions 123, 126, 152, 153, 156, and 185 each coordinate Zn(2+).

The protein belongs to the ZIP transporter (TC 2.A.5) family. As to quaternary structure, homodimer.

It localises to the cell inner membrane. In terms of biological role, mediates the uptake of Zn(2+). The sequence is that of Zinc transporter GufA (gufA) from Myxococcus xanthus.